The following is an 85-amino-acid chain: Probable weak neurotoxin 3FTx-Lio1 (85 aa).

A signal peptide spans 1–18 (MKAVILSLVAAFLYSGYT). 5 disulfide bridges follow: Cys-21/Cys-42, Cys-24/Cys-29, Cys-35/Cys-60, Cys-64/Cys-75, and Cys-76/Cys-81.

This sequence belongs to the three-finger toxin family. Ancestral subfamily. As to expression, expressed by the venom gland.

The protein resides in the secreted. The polypeptide is Probable weak neurotoxin 3FTx-Lio1 (Erythrolamprus poecilogyrus (Water snake)).